The chain runs to 236 residues: MKSSLRIQSTLGLLFRPCAVSAPATAPGLNAHARWAHKTAAQLPLIPKPTPFVPDVPTFLTLIGRDLKQHADKFPTWEALFTLTTDQLRELGVEPPRARRYLLRWRQRFREGKFGIGGDLKHVENGVAYLKIHEKEASPTRTSRRVVNVPANQHVEEVSEGERVKVKGYKVKGVSTIVGPYALPVQKGVAKLAVTEGMWEDKRGHKVDGGERRRAEVRFKRGVAERKALREKMGFY.

Belongs to the mitochondrion-specific ribosomal protein mS41 family. In terms of assembly, component of the mitochondrial small ribosomal subunit (mt-SSU). Mature N.crassa 74S mitochondrial ribosomes consist of a small (37S) and a large (54S) subunit. The 37S small subunit contains a 16S ribosomal RNA (16S mt-rRNA) and 32 different proteins. The 54S large subunit contains a 23S rRNA (23S mt-rRNA) and 42 different proteins.

It localises to the mitochondrion. Its function is as follows. Component of the mitochondrial ribosome (mitoribosome), a dedicated translation machinery responsible for the synthesis of mitochondrial genome-encoded proteins, including at least some of the essential transmembrane subunits of the mitochondrial respiratory chain. The mitoribosomes are attached to the mitochondrial inner membrane and translation products are cotranslationally integrated into the membrane. The protein is Small ribosomal subunit protein mS41 (fyv4) of Neurospora crassa (strain ATCC 24698 / 74-OR23-1A / CBS 708.71 / DSM 1257 / FGSC 987).